The primary structure comprises 344 residues: UDP-glycosyltransferase 73C4 (344 aa).

UDP-alpha-D-glucose-binding positions include S145, 202–203 (WA), 220–228 (HCGWNSSLE), and 242–245 (FAEQ).

It belongs to the UDP-glycosyltransferase family. In terms of tissue distribution, expressed in flowers and fruits.

The protein localises to the cytoplasm. It localises to the nucleus. Functionally, probable glucosyltransferase that cannot glycosylate abscisic acid (ABA) and auxin (IAA). This Solanum lycopersicum (Tomato) protein is UDP-glycosyltransferase 73C4.